Here is a 306-residue protein sequence, read N- to C-terminus: Porphobilinogen deaminase (306 aa).

C234 carries the post-translational modification S-(dipyrrolylmethanemethyl)cysteine.

It belongs to the HMBS family. As to quaternary structure, monomer. It depends on dipyrromethane as a cofactor.

The catalysed reaction is 4 porphobilinogen + H2O = hydroxymethylbilane + 4 NH4(+). It functions in the pathway porphyrin-containing compound metabolism; protoporphyrin-IX biosynthesis; coproporphyrinogen-III from 5-aminolevulinate: step 2/4. Functionally, tetrapolymerization of the monopyrrole PBG into the hydroxymethylbilane pre-uroporphyrinogen in several discrete steps. The chain is Porphobilinogen deaminase from Mycobacteroides abscessus (strain ATCC 19977 / DSM 44196 / CCUG 20993 / CIP 104536 / JCM 13569 / NCTC 13031 / TMC 1543 / L948) (Mycobacterium abscessus).